Consider the following 330-residue polypeptide: DNA primase small subunit PriS (330 aa).

Active-site residues include Asp101 and Asp103. Positions 116, 119, 128, and 131 each coordinate Zn(2+). The active site involves Asp235.

The protein belongs to the eukaryotic-type primase small subunit family. Heterodimer of a small subunit (PriS) and a large subunit (PriL). Mg(2+) serves as cofactor. Mn(2+) is required as a cofactor.

Functionally, catalytic subunit of DNA primase, an RNA polymerase that catalyzes the synthesis of short RNA molecules used as primers for DNA polymerase during DNA replication. The small subunit contains the primase catalytic core and has DNA synthesis activity on its own. Binding to the large subunit stabilizes and modulates the activity, increasing the rate of DNA synthesis while decreasing the length of the DNA fragments, and conferring RNA synthesis capability. The DNA polymerase activity may enable DNA primase to also catalyze primer extension after primer synthesis. May also play a role in DNA repair. This chain is DNA primase small subunit PriS, found in Saccharolobus islandicus (strain M.16.27) (Sulfolobus islandicus).